Reading from the N-terminus, the 597-residue chain is Lysine--tRNA ligase (597 aa).

Residues Glu501 and Glu508 each coordinate Mg(2+).

This sequence belongs to the class-II aminoacyl-tRNA synthetase family. In terms of assembly, homodimer. It depends on Mg(2+) as a cofactor.

The protein localises to the cytoplasm. The catalysed reaction is tRNA(Lys) + L-lysine + ATP = L-lysyl-tRNA(Lys) + AMP + diphosphate. This is Lysine--tRNA ligase (lysS) from Aquifex aeolicus (strain VF5).